The primary structure comprises 124 residues: Small t antigen (124 aa).

The 87-residue stretch at 10–96 (ELRGLLGTPD…LPKIFWLRFQ (87 aa)) folds into the J domain.

It is found in the host cytoplasm. The protein localises to the host nucleus. Promotes efficient viral genome replication by accelerating both G1 and S phase progression of the cell cycle. The polypeptide is Small t antigen (Bos taurus (Bovine)).